A 912-amino-acid polypeptide reads, in one-letter code: SVEPRQPFGRLDAPATAPTARAPGSNGIRRRADSPVRGCGFPSLISPPRKGPVAEEDEEDDDEDDEGHEDWREAYGSHLQLEVEPSTRDPRDEGTADAWIERNPSLIRLTGKHPLNCEPPLARLMHHGFITPAPLHYVRNHGAVPRGDWATWTVEVTGLVRRPARLTMDELANGFPAAEVPATLVCAGNRRKEQNMVQQTVGFNWGAAGVSTSVWRGARLRDVLLRCGVMSKKGQALNVCFEGAEDLPGGGGSKYGTSMSREWAMDPSRDIILPYAQNGEPLLPDHGYPVRVLIPGCIGGRMVKWVRRIVVTTAESDNYYHFKDNRVLPSHVDAELANAEAWWYRPEYIINELNTNSVITTPGHDEILPINAFTTQRAYTIKGYAYSGGGKKITRVEVTLDGGESWMLCTLDIPEKPNKYGRYWCWCFWSVEIEVLDLLGAKEVAVRAWDQTHNTQPEKLIWNLMGMMNNCWFKIKVNVCRPHKGEIGLVFEHPTQPGNQTGGWMARQKHLETAEAAAPGLKRSTSTPFMNTAGDKQFTMSEVRKHGSKESAWIVVHGHVYDCTAFLKDHPGGADSILINAGSDCTEEFDAIHSDKAKALLDTYRIGELITTGTGYNSDNSVHGGSSLSHLAPIREATKVAGAPIALSSPREKVPCRLVDKKELSHDVRLFRFALPSSDQVLGLPVGKHIFVCATIDGKLCMRAYTPTSMVDEIGQFELLVKVYFRDEHPKFPNGGLMTQYLESLQVGSSSIDVKGPLGHVEYTGRGNFVINGKQRRARRLAMICGSSGITPMYQVIQAVLRDQPEDETEMHLVYANRSEDDILLRDELDRWATEYPDRLKVWYVIDQVKRPEDGWKFSVGFVTEDILRAHVPEGGDDTLALACGPPPMIKFAISPNLEKMKYDMANSFISF.

The disordered stretch occupies residues 1-99 (SVEPRQPFGR…PRDEGTADAW (99 aa)). Residues 13-23 (APATAPTARAP) are compositionally biased toward low complexity. Over residues 54–68 (AEEDEEDDDEDDEGH) the composition is skewed to acidic residues. Basic and acidic residues predominate over residues 85-94 (PSTRDPRDEG). A Mo-molybdopterin-binding site is contributed by Cys186. One can recognise a Cytochrome b5 heme-binding domain in the interval 535–610 (DKQFTMSEVR…LDTYRIGELI (76 aa)). The heme site is built by His570 and His593. An FAD-binding FR-type domain is found at 651 to 764 (REKVPCRLVD…KGPLGHVEYT (114 aa)). Residues 703 to 706 (RAYT), 720 to 724 (LVKVY), Phe725, Phe732, 737 to 739 (LMT), Ser788, and Thr791 each bind FAD.

The protein belongs to the nitrate reductase family. As to quaternary structure, homodimer. The cofactor is FAD. Requires heme as cofactor. It depends on Mo-molybdopterin as a cofactor.

The catalysed reaction is nitrite + NAD(+) + H2O = nitrate + NADH + H(+). Its function is as follows. Nitrate reductase is a key enzyme involved in the first step of nitrate assimilation in plants, fungi and bacteria. In Hordeum vulgare (Barley), this protein is Nitrate reductase [NADH].